The following is a 581-amino-acid chain: Pentatricopeptide repeat-containing protein At3g56550 (581 aa).

PPR repeat units follow at residues 70–104, 106–140, 141–171, 172–206, 207–241, 242–272, 273–307, 308–338, and 344–378; these read STSD…SVSR, DLFT…GFLD, DAIV…MPVR, DLVS…GVCG, DSYT…RCES, CVFV…MRKR, DVLT…GVRP, NAIT…MSSQ, and NVKH…EDPV. The type E motif stretch occupies residues 379 to 454; that stretch reads LWRTLLGSCK…VPGWSWIEIG (76 aa). The tract at residues 455 to 485 is type E(+) motif; it reads DQVHKFVVDDKMHPESAVIYSELGEVINRAI. A type DYW motif region spans residues 486–581; the sequence is LAGYKPEDSN…DGICSCNDYW (96 aa).

This sequence belongs to the PPR family. PCMP-H subfamily.

The polypeptide is Pentatricopeptide repeat-containing protein At3g56550 (PCMP-H80) (Arabidopsis thaliana (Mouse-ear cress)).